Consider the following 269-residue polypeptide: MSRRTYVRSERRRGCGDNLLQRIRLVVPSALQCCDGDLPIFDPQRPPARCVFQFNGEDNVSEAFPVEYIMRLMANWAQVDCDPYIKIQNTGVSVLFQGFFFRPTNAPVAEVSIDSNNVILSSTLSTGINLSALESIKRGGGIDRRPLQALMWVNCFVRMPYVQLSFRFMGPEDPSRTIKLMARATDAYMYKETGNNLDEYIRWRPSFRSPPENGSPNTSVQMQSDIKPALPDTQTTRVWKLALPVANVTYALFIVIVLVVVLGAVLFWK.

Residues 1–247 are Perinuclear space-facing; sequence MSRRTYVRSE…VWKLALPVAN (247 aa). The chain crosses the membrane as a helical span at residues 248-268; sequence VTYALFIVIVLVVVLGAVLFW. Lys-269 is a topological domain (nuclear).

It belongs to the herpesviridae NEC2 protein family. Forms a heterohexameric complex with NEC1. In terms of processing, phosphorylated.

It is found in the host nucleus inner membrane. Its function is as follows. Plays an essential role in virion nuclear egress, the first step of virion release from infected cell. Within the host nucleus, NEC1 interacts with the newly formed capsid through the vertexes and directs it to the inner nuclear membrane by associating with NEC2. Induces the budding of the capsid at the inner nuclear membrane as well as its envelopment into the perinuclear space. There, the NEC1/NEC2 complex promotes the fusion of the enveloped capsid with the outer nuclear membrane and the subsequent release of the viral capsid into the cytoplasm where it will reach the secondary budding sites in the host Golgi or trans-Golgi network. This Homo sapiens (Human) protein is Nuclear egress protein 2.